The following is a 154-amino-acid chain: MTSESTSPPVVPPLHSPKSPVWPTFPFHRESSRIWERGGGVSPRDLPSPLPTKRTRTYSATARASAGPVFKGVCKQFSRSQGHGFITPENGSEDIFVHVSDIEGEYVPVEGDEVTYKMCPIPPKNQKFQAVEVVLTQLAPHTPHETWSGQVVGS.

2 disordered regions span residues 1–22 (MTSE…SPVW) and 36–62 (ERGG…SATA). Serine 19 carries the phosphoserine modification. Residues 69–136 (VFKGVCKQFS…KFQAVEVVLT (68 aa)) form the CSD domain.

In terms of tissue distribution, brain-specific. Expression restricted to the pyramidal neurons of the cerebral cortex and in the Purkinje cells of the cerebellum.

The protein localises to the nucleus. The protein resides in the cytoplasm. Its function is as follows. RNA-binding factor which binds specifically to the very 3'-UTR ends of both histone H1 and H3.3 mRNAs, encompassing the polyadenylation signal. Might play a central role in the negative regulation of histone variant synthesis in the developing brain. The polypeptide is Cold shock domain-containing protein C2 (Csdc2) (Rattus norvegicus (Rat)).